Here is a 350-residue protein sequence, read N- to C-terminus: fMet-Leu-Phe receptor (350 aa).

Over 1–27 (METNSSLPTNISGGTPAVSAGYLFLDI) the chain is Extracellular. N-linked (GlcNAc...) asparagine glycosylation is found at Asn4 and Asn10. The helical transmembrane segment at 28–50 (ITYLVFAVTFVLGVLGNGLVIWV) threads the bilayer. The Cytoplasmic portion of the chain corresponds to 51-61 (AGFRMTHTVTT). Residues 62–83 (ISYLNLAVADFCFTSTLPFFMV) form a helical membrane-spanning segment. Topologically, residues 84 to 100 (RKAMGGHWPFGWFLCKF) are extracellular. A disulfide bridge connects residues Cys98 and Cys176. The helical transmembrane segment at 101-121 (VFTIVDINLFGSVFLIALIAL) threads the bilayer. Over 122-140 (DRCVCVLHPVWTQNHRTVS) the chain is Cytoplasmic. A helical transmembrane segment spans residues 141-162 (LAKKVIIGPWVMALLLTLPVII). Over 163-205 (RVTTVPGKTGTVACTFNFSPWTNDPKERINVAVAMLTVRGIIR) the chain is Extracellular. Residues 206-226 (FIIGFSAPMSIVAVSYGLIAT) form a helical membrane-spanning segment. At 227-242 (KIHKQGLIKSSRPLRV) the chain is on the cytoplasmic side. A helical membrane pass occupies residues 243–266 (LSFVAAAFFLCWSPYQVVALIATV). The Extracellular segment spans residues 267 to 285 (RIRELLQGMYKEIGIAVDV). A helical membrane pass occupies residues 286–305 (TSALAFFNSCLNPMLYVFMG). The Cytoplasmic segment spans residues 306 to 350 (QDFRERLIHALPASLERALTEDSTQTSDTATNSTLPSAEVELQAK). The tract at residues 325 to 350 (TEDSTQTSDTATNSTLPSAEVELQAK) is disordered. The segment covering 326–341 (EDSTQTSDTATNSTLP) has biased composition (polar residues). Ser328 is subject to Phosphoserine. Phosphothreonine occurs at positions 329 and 331. At Ser332 the chain carries Phosphoserine. Phosphothreonine occurs at positions 334 and 336. Ser338 bears the Phosphoserine mark. Thr339 carries the post-translational modification Phosphothreonine.

This sequence belongs to the G-protein coupled receptor 1 family. In terms of assembly, interacts with S.aureus chemotaxis inhibitory protein (CHIPS); the interaction blocks the receptor and may thus inhibit the immune response. In terms of processing, phosphorylated; which is necessary for desensitization. Neutrophils.

The protein localises to the cell membrane. High affinity receptor for N-formyl-methionyl peptides (fMLP), which are powerful neutrophil chemotactic factors. Binding of fMLP to the receptor stimulates intracellular calcium mobilization and superoxide anion release. This response is mediated via a G-protein that activates a phosphatidylinositol-calcium second messenger system. Receptor for TAFA4, mediates its effects on chemoattracting macrophages, promoting phagocytosis and increasing ROS release. Receptor for cathepsin CTSG, leading to increased phagocyte chemotaxis. This chain is fMet-Leu-Phe receptor (FPR1), found in Homo sapiens (Human).